The primary structure comprises 80 residues: Large ribosomal subunit protein bL31B (80 aa).

Belongs to the bacterial ribosomal protein bL31 family. Type B subfamily. Part of the 50S ribosomal subunit.

This Xylella fastidiosa (strain M23) protein is Large ribosomal subunit protein bL31B.